Consider the following 124-residue polypeptide: Small ribosomal subunit protein uS11 (124 aa).

The tract at residues arginine 102 to arginine 124 is disordered.

This sequence belongs to the universal ribosomal protein uS11 family. As to quaternary structure, part of the 30S ribosomal subunit.

In terms of biological role, located on the platform of the 30S subunit. The protein is Small ribosomal subunit protein uS11 of Methanococcus maripaludis (strain C5 / ATCC BAA-1333).